Reading from the N-terminus, the 77-residue chain is Translation initiation factor IF-1, chloroplastic (77 aa).

An S1-like domain is found at 1–71 (MKEQKLIHEG…TRGRIIYRLR (71 aa)).

It belongs to the IF-1 family. In terms of assembly, component of the 30S ribosomal translation pre-initiation complex which assembles on the 30S ribosome in the order IF-2 and IF-3, IF-1 and N-formylmethionyl-tRNA(fMet); mRNA recruitment can occur at any time during PIC assembly.

It is found in the plastid. The protein localises to the chloroplast. Functionally, one of the essential components for the initiation of protein synthesis. Stabilizes the binding of IF-2 and IF-3 on the 30S subunit to which N-formylmethionyl-tRNA(fMet) subsequently binds. Helps modulate mRNA selection, yielding the 30S pre-initiation complex (PIC). Upon addition of the 50S ribosomal subunit IF-1, IF-2 and IF-3 are released leaving the mature 70S translation initiation complex. The sequence is that of Translation initiation factor IF-1, chloroplastic from Acorus calamus var. americanus (American sweet flag).